The sequence spans 382 residues: Chaperone protein DnaJ (382 aa).

Residues 5–69 (DYYEILGVSK…EKRARYDRFG (65 aa)) form the J domain. The segment at 137–219 (GKETEIEIPR…CGGTGRVKRR (83 aa)) adopts a CR-type zinc-finger fold. 8 residues coordinate Zn(2+): C150, C153, C167, C170, C193, C196, C207, and C210. CXXCXGXG motif repeat units lie at residues 150–157 (CDTCQGSG), 167–174 (CPHCHGSG), 193–200 (CPVCGGTG), and 207–214 (CPTCGGTG). The segment at 154–175 (QGSGAKPGTSPTSCPHCHGSGQ) is disordered.

Belongs to the DnaJ family. As to quaternary structure, homodimer. Zn(2+) is required as a cofactor.

Its subcellular location is the cytoplasm. In terms of biological role, participates actively in the response to hyperosmotic and heat shock by preventing the aggregation of stress-denatured proteins and by disaggregating proteins, also in an autonomous, DnaK-independent fashion. Unfolded proteins bind initially to DnaJ; upon interaction with the DnaJ-bound protein, DnaK hydrolyzes its bound ATP, resulting in the formation of a stable complex. GrpE releases ADP from DnaK; ATP binding to DnaK triggers the release of the substrate protein, thus completing the reaction cycle. Several rounds of ATP-dependent interactions between DnaJ, DnaK and GrpE are required for fully efficient folding. Also involved, together with DnaK and GrpE, in the DNA replication of plasmids through activation of initiation proteins. In Geobacillus kaustophilus (strain HTA426), this protein is Chaperone protein DnaJ.